Here is a 249-residue protein sequence, read N- to C-terminus: DNA repair protein RecO (249 aa).

It belongs to the RecO family.

Its function is as follows. Involved in DNA repair and RecF pathway recombination. The sequence is that of DNA repair protein RecO from Rhodopseudomonas palustris (strain HaA2).